The chain runs to 884 residues: Peroxidase-like protein 2 (884 aa).

Disordered regions lie at residues 1–53 (TTSC…RTKG), 78–188 (VHSK…SQGA), 204–279 (EKET…DDDD), 653–695 (PEIP…SATQ), 710–744 (DLQP…GAVG), and 828–884 (VGGM…SDTK). Polar residues predominate over residues 17-29 (GTCNNVNKPTVGS). Residues 32-53 (DKFKRDVKPQYDDKKGDPRTKG) are compositionally biased toward basic and acidic residues. Positions 91-118 (KSSAVSPKMPSMGNLQSLGNLLSLGSVP) are enriched in low complexity. Over residues 119–129 (VPAPAPAPEPV) the composition is skewed to pro residues. 2 stretches are compositionally biased toward basic residues: residues 160 to 172 (PKSK…KPKP) and 230 to 245 (RTPK…QSIF). The segment covering 246-267 (RRRDDRKDDRKGLRGTKGRRDD) has biased composition (basic and acidic residues). A compositionally biased stretch (acidic residues) spans 268–279 (SDDNDDSDDDDD). Gly residues predominate over residues 828–856 (VGGMGGSVGVGGSVGSGGSGGSRGAGGSG). The segment covering 865-884 (DDSKCSDDEKQKYCKNSDTK) has biased composition (basic and acidic residues).

It belongs to the peroxidase family. Component of the acid-insoluble and acid-soluble organic matrix of calcified layers of the shell (at protein level).

Its subcellular location is the secreted. The sequence is that of Peroxidase-like protein 2 from Lottia gigantea (Giant owl limpet).